Here is a 494-residue protein sequence, read N- to C-terminus: UPF0371 protein spyM18_1356 (494 aa).

Belongs to the UPF0371 family.

This is UPF0371 protein spyM18_1356 from Streptococcus pyogenes serotype M18 (strain MGAS8232).